Consider the following 573-residue polypeptide: Solute carrier family 41 member 2 (573 aa).

Residues 1–162 (MTNSKGRSIT…KESSGIMALQ (162 aa)) are Extracellular-facing. A phosphoserine mark is found at Ser136 and Ser137. The helical transmembrane segment at 163–183 (ILVPFLLAGFGTVSAGMVLDI) threads the bilayer. Residues 184-195 (VQHWEVFRKVTE) lie on the Cytoplasmic side of the membrane. Residues 196 to 216 (VFILVPALLGLKGNLEMTLAS) traverse the membrane as a helical segment. Over 217-245 (RLSTAVNIGKMDSPIEKWNLIIGNLALKQ) the chain is Extracellular. A helical transmembrane segment spans residues 246 to 266 (VQATVVGFLAAVAAIILGWIP). Residues 267–282 (EGKYYLDHSILLCSSS) are Cytoplasmic-facing. The chain crosses the membrane as a helical span at residues 283-303 (VATAFIASLLQGIIMVGVIVG). Residues 304 to 313 (SKKTGINPDN) lie on the Extracellular side of the membrane. Residues 314-334 (VATPIAASFGDLITLAILAWI) form a helical membrane-spanning segment. At 335 to 347 (SQGLYSCLETYYY) the chain is on the cytoplasmic side. A helical transmembrane segment spans residues 348–368 (ISPLVGVFFLALTPIWIIIAA). The Extracellular portion of the chain corresponds to 369 to 376 (KHPATRTV). The helical transmembrane segment at 377–397 (LHSGWEPVITAMVISSIGGLI) threads the bilayer. At 398–406 (LDTTVSDPN) the chain is on the cytoplasmic side. Residues 407 to 427 (LVGIVVYTPVINGIGGNLVAI) form a helical membrane-spanning segment. At 428-469 (QASRISTYLHLHSIPGELPDEPKGCYYPFRTFFGPGVNNKSA) the chain is on the extracellular side. Residues 470–490 (QVLLLLVIPGHLIFLYTIHLM) form a helical membrane-spanning segment. Topologically, residues 491-498 (KSGHTSLT) are cytoplasmic. Residues 499–519 (IIFIVVYLFGAVLQVFTLLWI) form a helical membrane-spanning segment. The Extracellular segment spans residues 520-543 (ADWMVHHFWRKGKDPDSFSIPYLT). Residues 544–564 (ALGDLLGTALLALSFHFLWLI) form a helical membrane-spanning segment. The Cytoplasmic segment spans residues 565-573 (GDRDGDVGD).

Belongs to the SLC41A transporter family.

It localises to the cell membrane. The enzyme catalyses Mg(2+)(in) = Mg(2+)(out). It carries out the reaction Mn(2+)(in) = Mn(2+)(out). The catalysed reaction is Co(2+)(in) = Co(2+)(out). It catalyses the reaction Ni(2+)(in) = Ni(2+)(out). The enzyme catalyses Fe(2+)(in) = Fe(2+)(out). Its function is as follows. Acts as a plasma-membrane magnesium transporter. Can also mediate the transport of other divalent metal cations in an order of Ba(2+) &gt; Ni(2+) &gt; Co(2+) &gt; Fe(2+) &gt; Mn(2+). This Homo sapiens (Human) protein is Solute carrier family 41 member 2 (SLC41A2).